Here is a 137-residue protein sequence, read N- to C-terminus: Histone H2B (137 aa).

The span at 1-10 (MPPKAADKKP) shows a compositional bias: basic and acidic residues. The interval 1–45 (MPPKAADKKPANKAPATASKAPEKKDAGKKTAASGEKKKRTKARK) is disordered. Residues Lys8 and Lys9 each carry the N6-acetyllysine; alternate modification. Glycyl lysine isopeptide (Lys-Gly) (interchain with G-Cter in SUMO); alternate cross-links involve residues Lys8 and Lys9. An N6-acetyllysine modification is found at Lys13. Lys24 carries the post-translational modification N6-acetyllysine; alternate. Lys24 is covalently cross-linked (Glycyl lysine isopeptide (Lys-Gly) (interchain with G-Cter in SUMO); alternate). Lys25 is covalently cross-linked (Glycyl lysine isopeptide (Lys-Gly) (interchain with G-Cter in SUMO)). Lys131 is covalently cross-linked (Glycyl lysine isopeptide (Lys-Gly) (interchain with G-Cter in ubiquitin)).

It belongs to the histone H2B family. In terms of assembly, the nucleosome is a histone octamer containing two molecules each of H2A, H2B, H3 and H4 assembled in one H3-H4 heterotetramer and two H2A-H2B heterodimers. The octamer wraps approximately 147 bp of DNA. Post-translationally, monoubiquitinated to form H2BK123ub1. H2BK123ub1 gives a specific tag for epigenetic transcriptional activation and is also prerequisite for H3K4me and H3K79me formation. H2BK123ub1 also modulates the formation of double-strand breaks during meiosis and is a prerequisite for DNA-damage checkpoint activation. Acetylated by GCN5 to form H2BK11ac and H2BK16ac. H2BK16ac can also be formed by ESA1. Acetylation of N-terminal lysines and particularly formation of H2BK11acK16ac has a positive effect on transcription. In terms of processing, sumoylation to form H2BK6su or H2BK7su, and probably also H2BK16su or H2BK17su, occurs preferentially near the telomeres and represses gene transcription.

Its subcellular location is the nucleus. It localises to the chromosome. Core component of nucleosome. Nucleosomes wrap and compact DNA into chromatin, limiting DNA accessibility to the cellular machineries which require DNA as a template. Histones thereby play a central role in transcription regulation, DNA repair, DNA replication and chromosomal stability. DNA accessibility is regulated via a complex set of post-translational modifications of histones, also called histone code, and nucleosome remodeling. In Podospora anserina (Pleurage anserina), this protein is Histone H2B (HTB1).